Reading from the N-terminus, the 354-residue chain is Ribosomal RNA large subunit methyltransferase M (354 aa).

Residues S183, 216–219 (SPGG), D235, D255, and D271 each bind S-adenosyl-L-methionine. K300 functions as the Proton acceptor in the catalytic mechanism.

The protein belongs to the class I-like SAM-binding methyltransferase superfamily. RNA methyltransferase RlmE family. RlmM subfamily. As to quaternary structure, monomer.

The protein resides in the cytoplasm. The enzyme catalyses cytidine(2498) in 23S rRNA + S-adenosyl-L-methionine = 2'-O-methylcytidine(2498) in 23S rRNA + S-adenosyl-L-homocysteine + H(+). In terms of biological role, catalyzes the 2'-O-methylation at nucleotide C2498 in 23S rRNA. The protein is Ribosomal RNA large subunit methyltransferase M of Pseudomonas entomophila (strain L48).